Here is a 768-residue protein sequence, read N- to C-terminus: Dual specificity calcium/calmodulin-dependent 3',5'-cyclic nucleotide phosphodiesterase 1C (768 aa).

An N-acetylmethionine modification is found at Met1. A calmodulin-binding region spans residues 183–206; the sequence is EKPRFKSIVHAVQAGIFVERMYRR. The region spanning 211–588 is the PDEase domain; it reads VGLSYPPAVI…ERWRAKVPKE (378 aa). The Proton donor role is filled by His288. Residues His292, His328, Asp329, and Asp436 each contribute to the Zn(2+) site. Asp329 is a binding site for Mg(2+). Disordered stretches follow at residues 513–557 and 584–719; these read LIDE…INNS and KVPK…PPLR. 2 stretches are compositionally biased toward polar residues: residues 516–536 and 543–557; these read ETSQ…INSS and VKSS…INNS. Basic and acidic residues predominate over residues 584-614; the sequence is KVPKEEKAKKEAEEKARLAAEEKQKEMEAKS. Residues 631-641 show a composition bias toward polar residues; the sequence is ETKGQVNGTRT. Composition is skewed to basic and acidic residues over residues 642–659 and 665–692; these read SKGD…KAGE and DLKD…DGTK. Over residues 698–712 the composition is skewed to low complexity; sequence SPAPSTSSTSRLTLP.

The protein belongs to the cyclic nucleotide phosphodiesterase family. PDE1 subfamily. In terms of assembly, homodimer. Zn(2+) serves as cofactor. Mg(2+) is required as a cofactor. Highly expressed in olfactory epithelium and at moderate levels, in cerebellum, as well as weakly in forebrain, testis, heart and lung. In the olfactory epithelium, expressed by sensory neurons, but not epithelial cells.

The protein resides in the lysosome. It catalyses the reaction a nucleoside 3',5'-cyclic phosphate + H2O = a nucleoside 5'-phosphate + H(+). The enzyme catalyses 3',5'-cyclic GMP + H2O = GMP + H(+). The catalysed reaction is 3',5'-cyclic AMP + H2O = AMP + H(+). With respect to regulation, type I PDE are activated by the binding of calmodulin in the presence of Ca(2+). In terms of biological role, calmodulin-dependent cyclic nucleotide phosphodiesterase with a dual specificity for the second messengers cAMP and cGMP, which are key regulators of many important physiological processes. Has a high affinity for both cAMP and cGMP. Modulates the amplitude and duration of the cAMP signal in sensory cilia in response to odorant stimulation, hence contributing to the generation of action potentials. Regulates smooth muscle cell proliferation. Regulates the stability of growth factor receptors, including PDGFRB. This is Dual specificity calcium/calmodulin-dependent 3',5'-cyclic nucleotide phosphodiesterase 1C from Rattus norvegicus (Rat).